The following is a 90-amino-acid chain: Long neurotoxin 1 (90 aa).

The N-terminal stretch at Met1–Ser21 is a signal peptide. Cystine bridges form between Cys24–Cys42, Cys35–Cys63, Cys48–Cys52, Cys67–Cys78, and Cys79–Cys84.

This sequence belongs to the three-finger toxin family. Long-chain subfamily. Type II alpha-neurotoxin sub-subfamily. Expressed by the venom gland.

Its subcellular location is the secreted. Its function is as follows. Binds with high affinity to muscular (alpha-1/CHRNA1) and neuronal (alpha-7/CHRNA7) nicotinic acetylcholine receptor (nAChR) and inhibits acetylcholine from binding to the receptor, thereby impairing neuromuscular and neuronal transmission. The chain is Long neurotoxin 1 from Austrelaps superbus (Lowland copperhead snake).